Here is a 142-residue protein sequence, read N- to C-terminus: UPF0102 protein PsycPRwf_0497 (142 aa).

The protein belongs to the UPF0102 family.

This is UPF0102 protein PsycPRwf_0497 from Psychrobacter sp. (strain PRwf-1).